We begin with the raw amino-acid sequence, 580 residues long: Glutamine--tRNA ligase (580 aa).

The 'HIGH' region motif lies at 41-51 (PEPNGYLHIGH). Residues 42-44 (EPN) and 48-54 (HIGHAKA) each bind ATP. The L-glutamine site is built by Asp-74 and Tyr-218. ATP-binding positions include Thr-237, 285 to 286 (RL), and 293 to 295 (MSK). Residues 292–296 (VMSKR) carry the 'KMSKS' region motif.

The protein belongs to the class-I aminoacyl-tRNA synthetase family. In terms of assembly, monomer.

The protein localises to the cytoplasm. It catalyses the reaction tRNA(Gln) + L-glutamine + ATP = L-glutaminyl-tRNA(Gln) + AMP + diphosphate. This is Glutamine--tRNA ligase from Xylella fastidiosa (strain 9a5c).